The sequence spans 252 residues: Phosphomannomutase (252 aa).

Asp-13 acts as the Nucleophile in catalysis. The Mg(2+) site is built by Asp-13 and Asp-15. Asp-15 serves as the catalytic Proton donor/acceptor. Alpha-D-mannose 1-phosphate is bound by residues Arg-22, Arg-124, Arg-135, Arg-142, Ser-180, and Asp-182. Mg(2+) is bound by residues Asp-208, Tyr-220, and Thr-225.

The protein belongs to the eukaryotic PMM family. As to quaternary structure, homodimer. It depends on Mg(2+) as a cofactor. Expressed in roots, stems, leaves, flowers and immature fruits.

The protein localises to the cytoplasm. It catalyses the reaction alpha-D-mannose 1-phosphate = D-mannose 6-phosphate. The protein operates within nucleotide-sugar biosynthesis; GDP-alpha-D-mannose biosynthesis; alpha-D-mannose 1-phosphate from D-fructose 6-phosphate: step 2/2. Its function is as follows. Catalyzes the interconversion of mannose-6-phosphate to mannose-1-phosphate, the precursor for the synthesis of GDP-mannose. GDP-mannose is an essential sugar nucleotide for the synthesis of D-mannose-containing cell wall polysaccharides (galactomannans and glucomannans), glycolipids, glycoproteins and the antioxidant L-ascorbate. Can complement the yeast temperature-sensitive mutant sec53-6. The polypeptide is Phosphomannomutase (Nicotiana benthamiana).